Reading from the N-terminus, the 226-residue chain is Lipoprotein-releasing system ATP-binding protein LolD (226 aa).

The ABC transporter domain occupies 5-226; it reads LKATNINKIY…LLRNGHWENY (222 aa). Residue 41–48 participates in ATP binding; the sequence is GTSGSGKS.

It belongs to the ABC transporter superfamily. Lipoprotein translocase (TC 3.A.1.125) family. As to quaternary structure, the complex is composed of two ATP-binding proteins (LolD) and two transmembrane proteins (LolC and LolE).

Its subcellular location is the cell inner membrane. Its function is as follows. Part of the ABC transporter complex LolCDE involved in the translocation of mature outer membrane-directed lipoproteins, from the inner membrane to the periplasmic chaperone, LolA. Responsible for the formation of the LolA-lipoprotein complex in an ATP-dependent manner. In Psychrobacter cryohalolentis (strain ATCC BAA-1226 / DSM 17306 / VKM B-2378 / K5), this protein is Lipoprotein-releasing system ATP-binding protein LolD.